The primary structure comprises 411 residues: MLTVLAALSLLSLLTSATGRLAPDELCYAEPRRTGSPPNTQPERPPVIFEPPTIAIKAESKGCELILLDPPIDVSYRREDKVNASIAWFFDFGACRMPIAYREYYGCIGNAVPSPETCDAYSFTLIRTEGIVEFTIVNMSLLFQPGIYDSGNFIYSVLLDYHIFTGRVTLEVEKDTNYPCGMIHGLTAYGNINVDETMDNASPHPRAVGCFPEPIDNEAWGNVTFTELGIPDPNSFLDDEGDYPNISDCHSWESYTYPNTLRQATGPQTLLVGAVGLRILAQAWKFVGDETYDTIRAEAKNLETHVPSSAAESSLENQSTQEESNSPEVAHLRSVNSDDSTHTGGASNGIQDCDSQLKTVYACLALIGLGTCAMIGLIVYICVLRSKLSSLEFWRAQNVKHRNYQRLEYVA.

The first 19 residues, 1–19, serve as a signal peptide directing secretion; the sequence is MLTVLAALSLLSLLTSATG. N83, N138, N222, N245, and N317 each carry an N-linked (GlcNAc...) asparagine; by host glycan. Composition is skewed to polar residues over residues 306–327 and 334–345; these read VPSS…SNSP and SVNSDDSTHTGG. Residues 306–345 are disordered; it reads VPSSAAESSLENQSTQEESNSPEVAHLRSVNSDDSTHTGG. Residues 364–384 traverse the membrane as a helical segment; it reads LALIGLGTCAMIGLIVYICVL.

The protein belongs to the alphaherpesvirinae glycoprotein G family.

It localises to the virion membrane. In terms of biological role, chemokine-binding protein that inhibits neutrophils' chemotaxis. This Equine herpesvirus 1 (strain Kentucky A) (EHV-1) protein is Envelope glycoprotein G (gG).